The sequence spans 255 residues: Flagellar L-ring protein (255 aa).

An N-terminal signal peptide occupies residues 1-25 (MRRHSTRKTVARVAVVALAVGVLAG). A lipid anchor (N-palmitoyl cysteine) is attached at C26. C26 carries S-diacylglycerol cysteine lipidation.

The protein belongs to the FlgH family. As to quaternary structure, the basal body constitutes a major portion of the flagellar organelle and consists of four rings (L,P,S, and M) mounted on a central rod.

The protein resides in the cell outer membrane. It localises to the bacterial flagellum basal body. Assembles around the rod to form the L-ring and probably protects the motor/basal body from shearing forces during rotation. This Rhodospirillum rubrum (strain ATCC 11170 / ATH 1.1.1 / DSM 467 / LMG 4362 / NCIMB 8255 / S1) protein is Flagellar L-ring protein.